Here is a 176-residue protein sequence, read N- to C-terminus: Isopentenyl-diphosphate Delta-isomerase (176 aa).

His-22 and His-28 together coordinate Mn(2+). Residues 26–160 form the Nudix hydrolase domain; sequence LRHKAISVFI…PETFTPWLHI (135 aa). Cys-62 is a catalytic residue. His-64 contacts Mn(2+). Glu-82 serves as a coordination point for Mg(2+). 2 residues coordinate Mn(2+): Glu-108 and Glu-110. The active site involves Glu-110.

The protein belongs to the IPP isomerase type 1 family. Mg(2+) is required as a cofactor. The cofactor is Mn(2+).

The protein localises to the cytoplasm. The catalysed reaction is isopentenyl diphosphate = dimethylallyl diphosphate. The protein operates within isoprenoid biosynthesis; dimethylallyl diphosphate biosynthesis; dimethylallyl diphosphate from isopentenyl diphosphate: step 1/1. It participates in porphyrin-containing compound metabolism; chlorophyll biosynthesis. In terms of biological role, catalyzes the 1,3-allylic rearrangement of the homoallylic substrate isopentenyl (IPP) to its highly electrophilic allylic isomer, dimethylallyl diphosphate (DMAPP). The polypeptide is Isopentenyl-diphosphate Delta-isomerase (Jannaschia sp. (strain CCS1)).